A 406-amino-acid chain; its full sequence is Diaminopimelate decarboxylase (406 aa).

At lysine 52 the chain carries N6-(pyridoxal phosphate)lysine. Pyridoxal 5'-phosphate contacts are provided by residues glycine 231 and 265–268 (EPGR). The substrate site is built by arginine 268, arginine 304, and tyrosine 308. Cysteine 334 functions as the Proton donor in the catalytic mechanism. Residues glutamate 335 and tyrosine 362 each coordinate substrate. Residue tyrosine 362 participates in pyridoxal 5'-phosphate binding.

Belongs to the Orn/Lys/Arg decarboxylase class-II family. LysA subfamily. In terms of assembly, homodimer. Pyridoxal 5'-phosphate serves as cofactor.

The enzyme catalyses meso-2,6-diaminopimelate + H(+) = L-lysine + CO2. It functions in the pathway amino-acid biosynthesis; L-lysine biosynthesis via DAP pathway; L-lysine from DL-2,6-diaminopimelate: step 1/1. Specifically catalyzes the decarboxylation of meso-diaminopimelate (meso-DAP) to L-lysine. The polypeptide is Diaminopimelate decarboxylase (Neisseria meningitidis serogroup A / serotype 4A (strain DSM 15465 / Z2491)).